A 223-amino-acid chain; its full sequence is Deoxyribose-phosphate aldolase (223 aa).

Aspartate 92 acts as the Proton donor/acceptor in catalysis. Residue lysine 153 is the Schiff-base intermediate with acetaldehyde of the active site. Lysine 182 functions as the Proton donor/acceptor in the catalytic mechanism.

This sequence belongs to the DeoC/FbaB aldolase family. DeoC type 1 subfamily.

It localises to the cytoplasm. The catalysed reaction is 2-deoxy-D-ribose 5-phosphate = D-glyceraldehyde 3-phosphate + acetaldehyde. It functions in the pathway carbohydrate degradation; 2-deoxy-D-ribose 1-phosphate degradation; D-glyceraldehyde 3-phosphate and acetaldehyde from 2-deoxy-alpha-D-ribose 1-phosphate: step 2/2. Its function is as follows. Catalyzes a reversible aldol reaction between acetaldehyde and D-glyceraldehyde 3-phosphate to generate 2-deoxy-D-ribose 5-phosphate. This is Deoxyribose-phosphate aldolase from Mycoplasmoides gallisepticum (strain R(low / passage 15 / clone 2)) (Mycoplasma gallisepticum).